Reading from the N-terminus, the 344-residue chain is Fructose-bisphosphate aldolase (344 aa).

A D-glyceraldehyde 3-phosphate-binding site is contributed by serine 53. The active-site Proton donor is the aspartate 95. Histidine 96, aspartate 131, glutamate 161, and histidine 212 together coordinate Zn(2+). Residue glycine 213 coordinates dihydroxyacetone phosphate. Histidine 252 contributes to the Zn(2+) binding site. Residues 253-255 and 274-277 each bind dihydroxyacetone phosphate; these read GGS and NVDT.

It belongs to the class II fructose-bisphosphate aldolase family. Requires Zn(2+) as cofactor.

It catalyses the reaction beta-D-fructose 1,6-bisphosphate = D-glyceraldehyde 3-phosphate + dihydroxyacetone phosphate. It participates in carbohydrate degradation; glycolysis; D-glyceraldehyde 3-phosphate and glycerone phosphate from D-glucose: step 4/4. Catalyzes the aldol condensation of dihydroxyacetone phosphate (DHAP or glycerone-phosphate) with glyceraldehyde 3-phosphate (G3P) to form fructose 1,6-bisphosphate (FBP) in gluconeogenesis and the reverse reaction in glycolysis. The chain is Fructose-bisphosphate aldolase (fba) from Mycobacterium bovis (strain ATCC BAA-935 / AF2122/97).